The primary structure comprises 176 residues: Small ribosomal subunit protein uS5 (176 aa).

The S5 DRBM domain maps to 11-74 (LSEVLVDVNR…QAAKKRMMKV (64 aa)).

It belongs to the universal ribosomal protein uS5 family. Part of the 30S ribosomal subunit. Contacts proteins S4 and S8.

In terms of biological role, with S4 and S12 plays an important role in translational accuracy. Its function is as follows. Located at the back of the 30S subunit body where it stabilizes the conformation of the head with respect to the body. In Rickettsia africae (strain ESF-5), this protein is Small ribosomal subunit protein uS5.